Here is a 241-residue protein sequence, read N- to C-terminus: Glucosamine-6-phosphate deaminase (241 aa).

D67 functions as the Proton acceptor; for enolization step in the catalytic mechanism. Catalysis depends on N136, which acts as the For ring-opening step. H138 functions as the Proton acceptor; for ring-opening step in the catalytic mechanism. Residue E143 is the For ring-opening step of the active site.

The protein belongs to the glucosamine/galactosamine-6-phosphate isomerase family. NagB subfamily.

It catalyses the reaction alpha-D-glucosamine 6-phosphate + H2O = beta-D-fructose 6-phosphate + NH4(+). It functions in the pathway amino-sugar metabolism; N-acetylneuraminate degradation; D-fructose 6-phosphate from N-acetylneuraminate: step 5/5. Its function is as follows. Catalyzes the reversible isomerization-deamination of glucosamine 6-phosphate (GlcN6P) to form fructose 6-phosphate (Fru6P) and ammonium ion. This chain is Glucosamine-6-phosphate deaminase, found in Alkaliphilus oremlandii (strain OhILAs) (Clostridium oremlandii (strain OhILAs)).